Here is a 254-residue protein sequence, read N- to C-terminus: Protein orai-2 (254 aa).

4 helical membrane-spanning segments follow: residues 66–83, 94–114, 148–168, and 196–216; these read TSAL…EVQL, LIAF…ALLI, LAWG…VVLL, and AALV…VFTI.

This sequence belongs to the Orai family. Oligomerizes in homomeric and heteromeric ORAI complexes. Native CRAC channels most likely consist of hexameric ORAI heteromers, implying that diverse ORAI1, ORAI2 and ORAI3 subunit combinations with distinct biophysical properties can operate in a cell-type specific way. Interacts with STIM1; this regulates channel activity. Interacts with CRACR2A/EFCAB4B.

Its subcellular location is the cell membrane. It catalyses the reaction Ca(2+)(in) = Ca(2+)(out). CRAC channels are regulated by fast Ca(2+)-dependent inactivation (FCDI), a mechanism that limits Ca(2+) influx and cell toxicity. ORAI2 channels display prominent FCDI. Inhibited by lanthanides such as Gd(3+) ions. Pore-forming subunit of inward rectifying Ca(2+) release-activated Ca(2+) (CRAC) channels. Assembles with ORAI1 and ORAI3 to form hexameric CRAC channels that mediate Ca(2+) influx upon depletion of endoplasmic reticulum Ca(2+) store and channel activation by Ca(2+) sensor STIM1, a process known as store-operated Ca(2+) entry (SOCE). Various pore subunit combinations may account for distinct CRAC channel spatiotemporal and cell-type specific dynamics. ORAI1 mainly contributes to the generation of Ca(2+) plateaus involved in sustained Ca(2+) entry and is dispensable for cytosolic Ca(2+) oscillations, whereas ORAI2 and ORAI3 generate oscillatory patterns. CRAC channels assemble in Ca(2+) signaling microdomains where Ca(2+) influx is coupled to calmodulin and calcineurin signaling and activation of NFAT transcription factors recruited to ORAI1 via AKAP5. CRAC channels are the main pathway for Ca(2+) influx in T cells and promote the immune response to pathogens by activating NFAT-dependent cytokine and chemokine transcription. This Homo sapiens (Human) protein is Protein orai-2 (ORAI2).